The primary structure comprises 3371 residues: Abnormal spindle-like microcephaly-associated protein homolog (3371 aa).

Phosphoserine is present on residues S212, S215, S300, S325, and S540. Residues 536–559 are disordered; sequence RPHFSPVESKTSTVKHTKKVVTSS. One can recognise a Calponin-homology (CH) 1 domain in the interval 852-988; the sequence is KASKEILLAF…LLWKIALAFQ (137 aa). Residues 989-1014 are a coiled coil; that stretch reads VDISLNLDQLKEEIDFLKNTQSMKKT. A Phosphoserine modification is found at S1035. The region spanning 1042 to 1193 is the Calponin-homology (CH) 2 domain; it reads SESVKLLMDW…YLSFLCARLL (152 aa). IQ domains lie at 1198 to 1227, 1396 to 1427, 1469 to 1500, 1564 to 1593, 1587 to 1616, 1610 to 1639, 1644 to 1673, 1667 to 1698, 1717 to 1746, 1740 to 1769, 1790 to 1819, 1813 to 1844, 1863 to 1894, 1886 to 1917, 1936 to 1965, 1959 to 1990, 2009 to 2040, 2032 to 2063, 2082 to 2113, 2105 to 2134, 2155 to 2186, 2227 to 2258, 2250 to 2281, 2300 to 2331, 2323 to 2354, 2396 to 2427, 2446 to 2477, 2539 to 2570, 2580 to 2609, 2603 to 2634, 2653 to 2682, 2729 to 2760, 2751 to 2780, 2824 to 2853, 2847 to 2878, 2869 to 2900, 2944 to 2973, 2994 to 3025, 3096 to 3125, and 3119 to 3150; these read ETRA…RDKA, EERA…IIIQ, KRAA…VLQS, TRSA…SIVK, ILTS…ATVK, LKKA…IAQQ, RRAS…AAVS, QRKA…VVIQ, VRRA…AALK, QSAA…SALK, TRTA…AAVK, EHEA…SVIQ, LRRA…IIIQ, QQRC…HLIQ, TKXA…AAAT, MHQA…VIIQ, VKKA…TLIK, MHMA…IIIQ, ILKA…TLIQ, MRTA…VTKT, LRRS…AVIQ, LQKA…TVLQ, MRRA…QVIQ, QRHS…TLIQ, MHAS…VFVQ, MHRA…VLIQ, WRHS…VIIQ, RHQA…VFVQ, RTQA…AATR, MHLA…VVIQ, IQKS…KKMA, QRKA…RIQS, QRRA…AALT, IRSS…STIK, LKDS…RIQA, EVKA…RIIQ, RHQA…AALT, LKKS…RLLH, HSRA…RIAK, and FNKR…IRQR.

It is found in the cytoplasm. The protein localises to the cytoskeleton. The protein resides in the spindle. Its subcellular location is the nucleus. In terms of biological role, probable role in mitotic spindle regulation and coordination of mitotic processes. May have a preferential role in regulating neurogenesis. The protein is Abnormal spindle-like microcephaly-associated protein homolog (ASPM) of Bos taurus (Bovine).